A 248-amino-acid chain; its full sequence is UPF0736 protein ABC2536 (248 aa).

It belongs to the UPF0736 family.

The sequence is that of UPF0736 protein ABC2536 from Shouchella clausii (strain KSM-K16) (Alkalihalobacillus clausii).